A 256-amino-acid chain; its full sequence is 5-keto-4-deoxy-D-glucarate aldolase (256 aa).

The Proton acceptor role is filled by His-50. Gln-151 is a substrate binding site. Glu-153 serves as a coordination point for Mg(2+). The substrate site is built by Ser-178 and Asp-179. A Mg(2+)-binding site is contributed by Asp-179.

It belongs to the HpcH/HpaI aldolase family. KDGluc aldolase subfamily. Homohexamer; trimer of dimers. Mg(2+) is required as a cofactor.

It catalyses the reaction 5-dehydro-4-deoxy-D-glucarate = 2-hydroxy-3-oxopropanoate + pyruvate. It carries out the reaction 2-dehydro-3-deoxy-D-glucarate = 2-hydroxy-3-oxopropanoate + pyruvate. Its pathway is carbohydrate acid metabolism; galactarate degradation; D-glycerate from galactarate: step 2/3. In terms of biological role, catalyzes the reversible retro-aldol cleavage of both 5-keto-4-deoxy-D-glucarate and 2-keto-3-deoxy-D-glucarate to pyruvate and tartronic semialdehyde. The chain is 5-keto-4-deoxy-D-glucarate aldolase from Escherichia coli (strain ATCC 8739 / DSM 1576 / NBRC 3972 / NCIMB 8545 / WDCM 00012 / Crooks).